Consider the following 445-residue polypeptide: Glycine--tRNA ligase (445 aa).

The substrate site is built by K97 and E145. Residues 177–179 (RNE), 187–192 (FRTCEF), 262–263 (EI), and 308–311 (GLTR) each bind ATP. 192-196 (FEQME) is a substrate binding site. 304 to 308 (ETSLG) contacts substrate.

Belongs to the class-II aminoacyl-tRNA synthetase family. In terms of assembly, homodimer.

Its subcellular location is the cytoplasm. It carries out the reaction tRNA(Gly) + glycine + ATP = glycyl-tRNA(Gly) + AMP + diphosphate. Its function is as follows. Catalyzes the attachment of glycine to tRNA(Gly). This Borrelia hermsii (strain HS1 / DAH) protein is Glycine--tRNA ligase.